Consider the following 642-residue polypeptide: Threonine--tRNA ligase (642 aa).

In terms of domain architecture, TGS spans 1–61 (MPVITLPDGS…ESDAQLAIIT (61 aa)). The segment at 243 to 534 (DHRKIGKQLD…LTEEYAGFFP (292 aa)) is catalytic. The Zn(2+) site is built by Cys334, His385, and His511.

The protein belongs to the class-II aminoacyl-tRNA synthetase family. Homodimer. The cofactor is Zn(2+).

It localises to the cytoplasm. It catalyses the reaction tRNA(Thr) + L-threonine + ATP = L-threonyl-tRNA(Thr) + AMP + diphosphate + H(+). Functionally, catalyzes the attachment of threonine to tRNA(Thr) in a two-step reaction: L-threonine is first activated by ATP to form Thr-AMP and then transferred to the acceptor end of tRNA(Thr). Also edits incorrectly charged L-seryl-tRNA(Thr). The protein is Threonine--tRNA ligase of Yersinia pseudotuberculosis serotype O:1b (strain IP 31758).